The following is a 578-amino-acid chain: Moesin/ezrin/radixin homolog 1 (578 aa).

In terms of domain architecture, FERM spans 1-296; the sequence is MSPKALNVRV…GNHELYMRRR (296 aa). Positions 463-555 are disordered; the sequence is ASTTPQHHHV…HRENVRQGRD (93 aa). Positions 475-484 are enriched in acidic residues; it reads DENENEEELT. The segment covering 492–555 has biased composition (basic and acidic residues); that stretch reads VSRDLDTDEH…HRENVRQGRD (64 aa). Phosphothreonine is present on Thr559.

As to quaternary structure, interacts with wgn. Interacts with Mer and arm at the adherens junction. Interacts with cytoskeletal actin at apical buds of microvilli in the precellularised embryo. Interacts with PCID2 (possibly via FERM domain). Phosphorylated on Thr-559. In the oocyte this phosphorylation is induced by phosphatidylinositol 4,5-bisphosphate (PtdIns[4,5]P(2)) generated by sktl.

The protein localises to the cell junction. Its subcellular location is the adherens junction. It localises to the cell projection. The protein resides in the microvillus. It is found in the rhabdomere. The protein localises to the cell membrane. Its subcellular location is the cytoplasm. It localises to the cytoskeleton. The protein resides in the cell cortex. It is found in the cilium. The protein localises to the flagellum. Its subcellular location is the nucleus. It localises to the nucleoplasm. The protein resides in the chromosome. In terms of biological role, involved in connections of major cytoskeletal structures to the plasma membrane. Together with wgn, involved in control of axon targeting of R8 and R2-R5 photoreceptors, independent of egr. In the nucleus, recruited to sites of active transcription by RNA polymerase II where it has a role in nuclear mRNA export together with the mRNA export factor PCID2 and other messenger ribonucleoprotein (mRNP) particles. The chain is Moesin/ezrin/radixin homolog 1 (Moe) from Drosophila melanogaster (Fruit fly).